We begin with the raw amino-acid sequence, 144 residues long: Necrosis-inducing secreted protein 1 (144 aa).

The first 19 residues, 1–19, serve as a signal peptide directing secretion; it reads MQFRASIAAAAGLFALANA. N-linked (GlcNAc...) asparagine glycans are attached at residues N88, N126, and N133. Positions 103-132 are BAK1/SERK3-binding; sequence QYVVAAGLYSLYGASSSPTLSHYNVTVTVG.

It belongs to the NIS1 effector family.

It is found in the secreted. Its subcellular location is the host cytoplasm. Functionally, secreted effector that induces necrotic lesions in Nicotiana benthamiana. Interacts with the host receptor-like kinases (RLKs) BAK1/SERK3 and BKK1/SERK4, inhibits their kinase activity and suppresses INF1-induced pathogen-associated molecular pattern (PAMP)-triggered immunity (PTI) in N.benthamiana. Also interacts with the host receptor-like cytoplasmic kinase (RLCK) BIK1 and inhibits its kinase activity, thereby inhibiting PAMP-induced ROS generation. In PTI, phosphorylation relaying by RLKs and RLCKs is critical for the initiation of downstream signaling. The chain is Necrosis-inducing secreted protein 1 from Colletotrichum higginsianum (strain IMI 349063) (Crucifer anthracnose fungus).